We begin with the raw amino-acid sequence, 837 residues long: Protein TRANSPARENT TESTA 9 (837 aa).

An FPL domain is found at 42–192 (LRSIAEILTY…AVRALTLNVY (151 aa)). Residues 366-386 (TEEANQQCSSTAAGMSDDGNS) form a disordered region. Residues 368-378 (EANQQCSSTAA) show a composition bias toward polar residues.

This sequence belongs to the CLEC16A/gop-1 family.

The protein localises to the golgi apparatus membrane. In terms of biological role, involved in membrane trafficking and vacuole development through membrane fusion at the vacuole. Required for membrane trafficking machinery and accumulation of flavonoids in the seed coat. This chain is Protein TRANSPARENT TESTA 9, found in Arabidopsis thaliana (Mouse-ear cress).